A 374-amino-acid chain; its full sequence is Ribosomal RNA large subunit methyltransferase G (374 aa).

Belongs to the methyltransferase superfamily. RlmG family.

It is found in the cytoplasm. The catalysed reaction is guanosine(1835) in 23S rRNA + S-adenosyl-L-methionine = N(2)-methylguanosine(1835) in 23S rRNA + S-adenosyl-L-homocysteine + H(+). In terms of biological role, specifically methylates the guanine in position 1835 (m2G1835) of 23S rRNA. This chain is Ribosomal RNA large subunit methyltransferase G, found in Pseudomonas putida (strain W619).